A 553-amino-acid chain; its full sequence is CTP synthase (553 aa).

The amidoligase domain stretch occupies residues 1–275 (MPTETEYDPS…DQYVMEQFDM (275 aa)). Ser-24 is a CTP binding site. Ser-24 contributes to the UTP binding site. 25–30 (GLGKGI) contacts ATP. Residue Tyr-65 participates in L-glutamine binding. Asp-82 lines the ATP pocket. Positions 82 and 150 each coordinate Mg(2+). CTP is bound by residues 157–159 (DIE), 196–201 (KTKPTQ), and Lys-232. Residues 196-201 (KTKPTQ) and Lys-232 each bind UTP. The Glutamine amidotransferase type-1 domain occupies 308 to 540 (KYALEDAYMS…LDAVLERADV (233 aa)). Gly-362 contacts L-glutamine. Catalysis depends on Cys-389, which acts as the Nucleophile; for glutamine hydrolysis. Residues 390–393 (LGFQ), Glu-413, and Arg-470 contribute to the L-glutamine site. Catalysis depends on residues His-513 and Glu-515.

The protein belongs to the CTP synthase family. In terms of assembly, homotetramer.

The enzyme catalyses UTP + L-glutamine + ATP + H2O = CTP + L-glutamate + ADP + phosphate + 2 H(+). It carries out the reaction L-glutamine + H2O = L-glutamate + NH4(+). It catalyses the reaction UTP + NH4(+) + ATP = CTP + ADP + phosphate + 2 H(+). It functions in the pathway pyrimidine metabolism; CTP biosynthesis via de novo pathway; CTP from UDP: step 2/2. Allosterically activated by GTP, when glutamine is the substrate; GTP has no effect on the reaction when ammonia is the substrate. The allosteric effector GTP functions by stabilizing the protein conformation that binds the tetrahedral intermediate(s) formed during glutamine hydrolysis. Inhibited by the product CTP, via allosteric rather than competitive inhibition. In terms of biological role, catalyzes the ATP-dependent amination of UTP to CTP with either L-glutamine or ammonia as the source of nitrogen. Regulates intracellular CTP levels through interactions with the four ribonucleotide triphosphates. The sequence is that of CTP synthase from Halobacterium salinarum (strain ATCC 29341 / DSM 671 / R1).